The following is a 510-amino-acid chain: MEIRAAEISAILKEQIANFGTEAESAEVGQVLSVGDGIARVYGLDNVQAGEMVEFANGVKGMALNLESDNVGIVIFGEDRGIKEGDVVKRTQTIVDVPVGKGLLGRVVDGLGNPIDGKGDLVDVERKRAEVKAPGIIPRKSVHEPVQTGIKAIDSLIPIGRGQRELIIGDRQTGKTAVILDTILNQKAVNDKAKDDSEKLFCVYVAVGQKRSTVAQVVKVLADHGALDYTIVVAATASEPAPLQFLAPYTGCTMGEFFRDNGMHAVIFYDDLTKQAVAYRQMSLLLRRPPGREAFPGDVFYLHSRLLERAAKLNDDNGAGSLTALPVIETQANDVSAYIPTNVISITDGQIFLETDLFFKGIRPAVNVGLSVSRVGSSAQIKAMKQVAGSIKLELAQYREMAAFAQFASDLDPATQKLLARGARLTELLKQAQYSPLAVEEQVCVIYAGTRGYLDKLKTTDVVRYEASLLGALRTSGADLLESIRTGKALSKEIEQKLVKFLDDFGKKFA.

169–176 (GDRQTGKT) is a binding site for ATP.

The protein belongs to the ATPase alpha/beta chains family. In terms of assembly, F-type ATPases have 2 components, CF(1) - the catalytic core - and CF(0) - the membrane proton channel. CF(1) has five subunits: alpha(3), beta(3), gamma(1), delta(1), epsilon(1). CF(0) has four main subunits: a(1), b(1), b'(1) and c(9-12).

Its subcellular location is the cell inner membrane. It catalyses the reaction ATP + H2O + 4 H(+)(in) = ADP + phosphate + 5 H(+)(out). Produces ATP from ADP in the presence of a proton gradient across the membrane. The alpha chain is a regulatory subunit. This chain is ATP synthase subunit alpha, found in Rhodospirillum rubrum (strain ATCC 11170 / ATH 1.1.1 / DSM 467 / LMG 4362 / NCIMB 8255 / S1).